Consider the following 126-residue polypeptide: MAFSGIWNVYSQENYEPFLKAVGVPDDIIKVAKDIKPVIEIQQNGNDFVVTLKTPKNSQSNSFTVGQEAEITSAGGKKFKVTVNLEGGKLICKSDTFSHIQEVNGDEMVEQITIGSTTLIRKSKRS.

A2 carries the N-acetylalanine modification. Residues K77, H99, and Q101 each contribute to the cholate site.

The protein belongs to the calycin superfamily. Fatty-acid binding protein (FABP) family.

The protein resides in the cytoplasm. In terms of biological role, binds free fatty acids and their coenzyme A derivatives, bilirubin, and some other small molecules in the cytoplasm. May be involved in intracellular lipid transport. The sequence is that of Fatty acid-binding protein, liver (fabp1) from Aquarana catesbeiana (American bullfrog).